A 317-amino-acid chain; its full sequence is Methionyl-tRNA formyltransferase (317 aa).

A (6S)-5,6,7,8-tetrahydrofolate-binding site is contributed by 112–115 (SLLP).

The protein belongs to the Fmt family.

It catalyses the reaction L-methionyl-tRNA(fMet) + (6R)-10-formyltetrahydrofolate = N-formyl-L-methionyl-tRNA(fMet) + (6S)-5,6,7,8-tetrahydrofolate + H(+). Its function is as follows. Attaches a formyl group to the free amino group of methionyl-tRNA(fMet). The formyl group appears to play a dual role in the initiator identity of N-formylmethionyl-tRNA by promoting its recognition by IF2 and preventing the misappropriation of this tRNA by the elongation apparatus. This Mycoplasma mycoides subsp. mycoides SC (strain CCUG 32753 / NCTC 10114 / PG1) protein is Methionyl-tRNA formyltransferase.